A 438-amino-acid chain; its full sequence is MTELDSLWEAIQNSFRKSKGDTTYKNLIAPAKPLDFANGRLRIQLPSQYHRDFWEQLTDQVVEIVYQRTGQEIRPDYVLATDPTPLAQTPPRPQSTFKEETPLNPEYTFQTFIEGRSNMMAYASAFAASESPGDQYNPLLIYGGVGLGKTHLMQAIANNMKFHNPSVRIKYVTSENFMNDFVNSIKSGTQEEFRREYRDLDALLVDDIQFFASKGETQTEFFNTFNVLYDNKKQIVLTSDKDPREIPNLTERLVSRFMWGVPVEITSPALETRIAILKSKAEEEHLDVPNDVLNFVAQRINTNVRELEGALMRIRVFSELHQQPITLKLATEALQGMVANTETTVTIDLIQKRVATYYNINQSDITGKKRTKNIVVPRQIAMYLSRELTDNSLPKIGKEFGGKDHTTVLHAIDKIERQVQEDARLQGDLVKLKNDLQA.

Residues 1–71 (MTELDSLWEA…VEIVYQRTGQ (71 aa)) form a domain I, interacts with DnaA modulators region. The tract at residues 71-101 (QEIRPDYVLATDPTPLAQTPPRPQSTFKEET) is domain II. The interval 81–100 (TDPTPLAQTPPRPQSTFKEE) is disordered. A domain III, AAA+ region region spans residues 102–318 (PLNPEYTFQT…GALMRIRVFS (217 aa)). ATP-binding residues include Gly146, Gly148, Lys149, and Thr150. The domain IV, binds dsDNA stretch occupies residues 319–438 (ELHQQPITLK…LVKLKNDLQA (120 aa)).

It belongs to the DnaA family. Oligomerizes as a right-handed, spiral filament on DNA at oriC.

It is found in the cytoplasm. In terms of biological role, plays an essential role in the initiation and regulation of chromosomal replication. ATP-DnaA binds to the origin of replication (oriC) to initiate formation of the DNA replication initiation complex once per cell cycle. Binds the DnaA box (a 9 base pair repeat at the origin) and separates the double-stranded (ds)DNA. Forms a right-handed helical filament on oriC DNA; dsDNA binds to the exterior of the filament while single-stranded (ss)DNA is stabiized in the filament's interior. The ATP-DnaA-oriC complex binds and stabilizes one strand of the AT-rich DNA unwinding element (DUE), permitting loading of DNA polymerase. After initiation quickly degrades to an ADP-DnaA complex that is not apt for DNA replication. Binds acidic phospholipids. This chain is Chromosomal replication initiator protein DnaA, found in Limosilactobacillus fermentum (strain NBRC 3956 / LMG 18251) (Lactobacillus fermentum).